Consider the following 102-residue polypeptide: Small ribosomal subunit protein uS10 (102 aa).

It belongs to the universal ribosomal protein uS10 family. In terms of assembly, part of the 30S ribosomal subunit.

In terms of biological role, involved in the binding of tRNA to the ribosomes. The chain is Small ribosomal subunit protein uS10 from Exiguobacterium sp. (strain ATCC BAA-1283 / AT1b).